The following is an 88-amino-acid chain: Adenylosuccinate lyase (88 aa).

Residues 4–5 (RY) and 67–69 (KHD) each bind N(6)-(1,2-dicarboxyethyl)-AMP.

Belongs to the lyase 1 family. Adenylosuccinate lyase subfamily. Homotetramer and homodimer. Residues from neighboring subunits contribute catalytic and substrate-binding residues to each active site.

It catalyses the reaction N(6)-(1,2-dicarboxyethyl)-AMP = fumarate + AMP. It carries out the reaction (2S)-2-[5-amino-1-(5-phospho-beta-D-ribosyl)imidazole-4-carboxamido]succinate = 5-amino-1-(5-phospho-beta-D-ribosyl)imidazole-4-carboxamide + fumarate. Its pathway is purine metabolism; AMP biosynthesis via de novo pathway; AMP from IMP: step 2/2. The protein operates within purine metabolism; IMP biosynthesis via de novo pathway; 5-amino-1-(5-phospho-D-ribosyl)imidazole-4-carboxamide from 5-amino-1-(5-phospho-D-ribosyl)imidazole-4-carboxylate: step 2/2. Catalyzes two reactions in de novo purine nucleotide biosynthesis. Catalyzes the breakdown of 5-aminoimidazole- (N-succinylocarboxamide) ribotide (SAICAR or 2-[5-amino-1-(5-phospho-beta-D-ribosyl)imidazole-4-carboxamido]succinate) to 5-aminoimidazole-4-carboxamide ribotide (AICAR or 5-amino-1-(5-phospho-beta-D-ribosyl)imidazole-4-carboxamide) and fumarate, and of adenylosuccinate (ADS or N(6)-(1,2-dicarboxyethyl)-AMP) to adenosine monophosphate (AMP) and fumarate. The sequence is that of Adenylosuccinate lyase (purB) from Spiroplasma citri.